The following is a 277-amino-acid chain: Ribosomal RNA small subunit methyltransferase A (277 aa).

Positions 24, 26, 51, 72, 96, and 123 each coordinate S-adenosyl-L-methionine.

This sequence belongs to the class I-like SAM-binding methyltransferase superfamily. rRNA adenine N(6)-methyltransferase family. RsmA subfamily.

It is found in the cytoplasm. It carries out the reaction adenosine(1518)/adenosine(1519) in 16S rRNA + 4 S-adenosyl-L-methionine = N(6)-dimethyladenosine(1518)/N(6)-dimethyladenosine(1519) in 16S rRNA + 4 S-adenosyl-L-homocysteine + 4 H(+). Its function is as follows. Specifically dimethylates two adjacent adenosines (A1518 and A1519) in the loop of a conserved hairpin near the 3'-end of 16S rRNA in the 30S particle. May play a critical role in biogenesis of 30S subunits. The protein is Ribosomal RNA small subunit methyltransferase A of Ureaplasma parvum serovar 3 (strain ATCC 27815 / 27 / NCTC 11736).